The following is a 67-amino-acid chain: MKSYKVNLELFDKAVHREYRIIQRFFDMGEAEEFKTRFKDIRDKIQSDTATKDELLEVAEVIKRNMN.

This is an uncharacterized protein from Enterobacteria phage T4 (Bacteriophage T4).